A 400-amino-acid polypeptide reads, in one-letter code: Na(+)/H(+) antiporter NhaA (400 aa).

12 helical membrane-spanning segments follow: residues 26-46 (AGGI…NSPL), 71-91 (LIHW…GMEV), 107-127 (IFPA…YWFI), 137-157 (GWAI…ALLS), 166-186 (IFLL…IALF), 189-209 (HGLS…LILL), 212-232 (FKVS…ASVL), 233-253 (KSGV…PLKG), 273-293 (FVIL…GIDV), 299-319 (PLLL…IFGF), 340-360 (IFAV…LASL), and 373-393 (LSRL…YLFL).

Belongs to the NhaA Na(+)/H(+) (TC 2.A.33) antiporter family.

The protein localises to the cell inner membrane. The catalysed reaction is Na(+)(in) + 2 H(+)(out) = Na(+)(out) + 2 H(+)(in). In terms of biological role, na(+)/H(+) antiporter that extrudes sodium in exchange for external protons. The chain is Na(+)/H(+) antiporter NhaA from Haemophilus influenzae (strain PittGG).